Reading from the N-terminus, the 480-residue chain is Proline--tRNA ligase (480 aa).

Belongs to the class-II aminoacyl-tRNA synthetase family. ProS type 3 subfamily. As to quaternary structure, homodimer.

Its subcellular location is the cytoplasm. The catalysed reaction is tRNA(Pro) + L-proline + ATP = L-prolyl-tRNA(Pro) + AMP + diphosphate. Functionally, catalyzes the attachment of proline to tRNA(Pro) in a two-step reaction: proline is first activated by ATP to form Pro-AMP and then transferred to the acceptor end of tRNA(Pro). The chain is Proline--tRNA ligase from Metallosphaera sedula (strain ATCC 51363 / DSM 5348 / JCM 9185 / NBRC 15509 / TH2).